We begin with the raw amino-acid sequence, 174 residues long: Peptide methionine sulfoxide reductase MsrA (174 aa).

Residue Cys11 is part of the active site.

The protein belongs to the MsrA Met sulfoxide reductase family.

The catalysed reaction is L-methionyl-[protein] + [thioredoxin]-disulfide + H2O = L-methionyl-(S)-S-oxide-[protein] + [thioredoxin]-dithiol. The enzyme catalyses [thioredoxin]-disulfide + L-methionine + H2O = L-methionine (S)-S-oxide + [thioredoxin]-dithiol. Functionally, has an important function as a repair enzyme for proteins that have been inactivated by oxidation. Catalyzes the reversible oxidation-reduction of methionine sulfoxide in proteins to methionine. This chain is Peptide methionine sulfoxide reductase MsrA, found in Pasteurella multocida (strain Pm70).